Here is an 832-residue protein sequence, read N- to C-terminus: tRNA ligase (832 aa).

Lysine 108 (N6-AMP-lysine intermediate) is an active-site residue.

The protein belongs to the TRL1 family.

The catalysed reaction is ATP + (ribonucleotide)n-3'-hydroxyl + 5'-phospho-(ribonucleotide)m = (ribonucleotide)n+m + AMP + diphosphate.. In terms of biological role, one of the two proteins required for the splicing of precursor tRNA molecules containing introns. The ligation activity requires three enzymatic activities: phosphorylation of the 5' terminus of the 3' half-tRNA in the presence of ATP, opening of the 2'3'-cyclic phosphodiester bond of the 5' half-tRNA leaving a 2'-phosphomonoester and ligation of the two tRNA halves in an ATP-dependent reaction. The protein is tRNA ligase (LIG1) of Candida albicans (strain SC5314 / ATCC MYA-2876) (Yeast).